The chain runs to 285 residues: Thrombin-like enzyme TLBm (285 aa).

The region spanning 1-273 (VIGGDECNIN…HLDWSQSVIA (273 aa)) is the Peptidase S1 domain. 6 cysteine pairs are disulfide-bonded: C7/C181, C30/C46, C94/C284, C156/C234, C192/C209, and C224/C249. Residues H45 and D113 each act as charge relay system in the active site. S228 serves as the catalytic Charge relay system.

It belongs to the peptidase S1 family. Snake venom subfamily. As to quaternary structure, monomer. In terms of processing, homologous thrombin-like enzymes are N-glycosylated. This enzyme does not contain the consensus glycosylation sites, suggesting it is not glycosylated. In terms of tissue distribution, expressed by the venom gland.

Its subcellular location is the secreted. With respect to regulation, inhibited by PMSF, disodium-EDTA, S(Dm) and soybean trypsin inhibitor (SBTI). SBTI and S(Dm) (the anti-hemorrhagic protein) acts as a non-competitive inhibitors that decrease the enzymatic activity. Functionally, thrombin-like enzyme that induces the formation of fibrin clot. Cleaves the Aalpha-chain of fibrinogen (FGA) with higher activity than the Bbeta-chain (FGB). Induces platelet aggregation in both platelet-rich plasma and in washed platelet preparations. This aggregation is strongly inhibited by preincubation of the enzyme with PMSF. This chain is Thrombin-like enzyme TLBm, found in Bothrops marajoensis (Marajo lancehead).